The sequence spans 940 residues: PTS system glucose-specific EIICBA component (940 aa).

The 284-residue stretch at 1-284 (MQIKAQDTGQ…YAPLWYTSAG (284 aa)) folds into the PTS EIIC type-1; first part domain. 5 helical membrane-spanning segments follow: residues 43-63 (LMIP…GDAI), 83-103 (GGDV…AITF), 112-132 (FSAF…ILPF), 175-195 (VFGG…FYAI), and 209-229 (FVPI…LMIW). The unknown stretch occupies residues 285–478 (GSLQEIVNQQ…VNSFRVAVES (194 aa)). Residues 479–630 (LNPAQYSQGK…FNLATPGRGG (152 aa)) enclose the PTS EIIC type-1; second part domain. Helical transmembrane passes span 487 to 507 (GKFP…ILAA), 515 to 535 (AASI…TEPF), 537 to 557 (FTFL…LAAV), 564 to 584 (ILGA…ILYG), and 598 to 618 (LVPI…YFLI). In terms of domain architecture, PTS EIIB type-1 spans 661 to 743 (QIEAGILLQA…QDIIQGKVNW (83 aa)). The active-site Phosphocysteine intermediate; for EIIB activity is the C683. One can recognise a PTS EIIA type-1 domain in the interval 794-907 (DETFKQKLVG…NPITPFVVMK (114 aa)). H847 acts as the Tele-phosphohistidine intermediate; for EIIA activity in catalysis.

The protein resides in the cell membrane. The enzyme catalyses N(pros)-phospho-L-histidyl-[protein] + D-glucose(out) = D-glucose 6-phosphate(in) + L-histidyl-[protein]. Its function is as follows. The phosphoenolpyruvate-dependent sugar phosphotransferase system (sugar PTS), a major carbohydrate active transport system, catalyzes the phosphorylation of incoming sugar substrates concomitantly with their translocation across the cell membrane. This system is involved in glucose transport. The polypeptide is PTS system glucose-specific EIICBA component (ptsG) (Mycoplasma pneumoniae (strain ATCC 29342 / M129 / Subtype 1) (Mycoplasmoides pneumoniae)).